Here is a 401-residue protein sequence, read N- to C-terminus: Tumor necrosis factor receptor superfamily member 11B (401 aa).

The first 21 residues, 1–21 (MNKWLCCALLVLLDIIEWTTQ), serve as a signal peptide directing secretion. 4 TNFR-Cys repeats span residues 24–62 (LPPK…KTLC), 65–105 (CPDH…NRVC), 107–142 (CEEG…NTVC), and 145–185 (CPDG…DNVC). 8 disulfides stabilise this stretch: Cys41–Cys54, Cys44–Cys62, Cys65–Cys80, Cys83–Cys97, Cys87–Cys105, Cys107–Cys118, Cys124–Cys142, and Cys145–Cys160. Asn98 carries an N-linked (GlcNAc...) asparagine glycan. N-linked (GlcNAc...) asparagine glycosylation is found at Asn165 and Asn178. Cys166 and Cys185 are disulfide-bonded. 2 consecutive Death domains span residues 198-269 (DVTL…MVKK) and 283-365 (RHLG…THSL). N-linked (GlcNAc...) asparagine glycosylation is present at Asn289.

Homodimer. Interacts with TNFSF10 and TNFSF11. Highly expressed in liver, lung, stomach, intestines and calvaria. Highly expressed in decidua and placenta, and in embryo.

It localises to the secreted. In terms of biological role, acts as a decoy receptor for TNFSF11/RANKL and thereby neutralizes its function in osteoclastogenesis. Inhibits the activation of osteoclasts and promotes osteoclast apoptosis in vitro. Bone homeostasis seems to depend on the local ratio between TNFSF11 and TNFRSF11B. May also play a role in preventing arterial calcification. May act as decoy receptor for TNFSF10/TRAIL and protect against apoptosis. TNFSF10/TRAIL binding blocks the inhibition of osteoclastogenesis. This chain is Tumor necrosis factor receptor superfamily member 11B (Tnfrsf11b), found in Mus musculus (Mouse).